The primary structure comprises 589 residues: Cell fusion protein aff-1 (589 aa).

Residues 1–20 form the signal peptide; it reads MRLWQWSIAVAICLVMVTEA. At 21–537 the chain is on the extracellular side; sequence RLRRHHRKRR…MAHGGDFTEW (517 aa). Residues Asn58, Asn138, Asn205, Asn335, Asn382, Asn392, and Asn408 are each glycosylated (N-linked (GlcNAc...) asparagine). The helical transmembrane segment at 538–558 threads the bilayer; that stretch reads LKIGIHIVIAVGLLLLLILLF. Over 559 to 589 the chain is Cytoplasmic; sequence TKCLVPLACCSLSIPFKNRNKKKKKKNSSDY.

It belongs to the EFF/AFF cell fusogen family. In terms of tissue distribution, expressed in amphid sheath cells.

It localises to the cell membrane. It is found in the apical cell membrane. Required for cell fusion events during development including the fusion of anchor cells (AC), vulval A and vulval D rings, and late epidermal seam cells. Required for amphid sheath cell fusion induced by entry into dauer stage. The protein is Cell fusion protein aff-1 of Caenorhabditis elegans.